The sequence spans 264 residues: NAD kinase (264 aa).

Aspartate 45 functions as the Proton acceptor in the catalytic mechanism. NAD(+) contacts are provided by residues 45–46 (DG), histidine 50, 121–122 (NE), arginine 147, aspartate 149, alanine 184, and glutamine 224.

Belongs to the NAD kinase family. Requires a divalent metal cation as cofactor.

It is found in the cytoplasm. It catalyses the reaction NAD(+) + ATP = ADP + NADP(+) + H(+). In terms of biological role, involved in the regulation of the intracellular balance of NAD and NADP, and is a key enzyme in the biosynthesis of NADP. Catalyzes specifically the phosphorylation on 2'-hydroxyl of the adenosine moiety of NAD to yield NADP. The protein is NAD kinase of Lysinibacillus sphaericus (strain C3-41).